Consider the following 623-residue polypeptide: C2H2-type transcription factor zfpA (623 aa).

Positions 202–219 are enriched in polar residues; that stretch reads GLAVSSPMPNSGPHSRSV. Disordered regions lie at residues 202–256 and 468–493; these read GLAV…EKGR and SNKA…NGKA. Residues 227 to 239 are compositionally biased toward low complexity; the sequence is SISSTNSRRSQLS. The C2H2-type zinc finger occupies 255–276; it reads GRCPHPDCGRVFKDLKAHMLTH.

Its subcellular location is the nucleus. Functionally, transcription factor involved in fungal growth and virulence potential. Negatively regulates antifungal drug susceptibility via transcriptional inhibition of the expressions of drug efflux pumps in a crzA-dependent way. Under the treatment of azoles, both zfpA and crzA transfer to nuclei and coregulate the expression of multidrug transporters and then keep normal drug susceptibility in fungal cells. The sequence is that of C2H2-type transcription factor zfpA from Aspergillus fumigatus (strain CBS 144.89 / FGSC A1163 / CEA10) (Neosartorya fumigata).